The chain runs to 462 residues: GTPase Der (462 aa).

EngA-type G domains lie at 3–166 and 175–348; these read PVIA…ITEM and IKIA…HSAI. GTP contacts are provided by residues 9–16, 56–60, 118–121, 181–188, 228–232, and 293–296; these read GRPNVGKS, DTGGI, NKTD, DTAGV, and NKWD. The KH-like domain occupies 349–433; sequence QSFSTPKLTR…PLKIEFKGGQ (85 aa).

The protein belongs to the TRAFAC class TrmE-Era-EngA-EngB-Septin-like GTPase superfamily. EngA (Der) GTPase family. As to quaternary structure, associates with the 50S ribosomal subunit.

Functionally, GTPase that plays an essential role in the late steps of ribosome biogenesis. This Legionella pneumophila (strain Lens) protein is GTPase Der.